Reading from the N-terminus, the 426-residue chain is UDP-N-acetylglucosamine 1-carboxyvinyltransferase (426 aa).

24–25 (KN) provides a ligand contact to phosphoenolpyruvate. Arginine 95 is a UDP-N-acetyl-alpha-D-glucosamine binding site. Cysteine 119 (proton donor) is an active-site residue. Cysteine 119 carries the post-translational modification 2-(S-cysteinyl)pyruvic acid O-phosphothioketal. UDP-N-acetyl-alpha-D-glucosamine contacts are provided by residues 124-128 (RPVDQ), aspartate 308, and valine 330.

It belongs to the EPSP synthase family. MurA subfamily.

The protein resides in the cytoplasm. It carries out the reaction phosphoenolpyruvate + UDP-N-acetyl-alpha-D-glucosamine = UDP-N-acetyl-3-O-(1-carboxyvinyl)-alpha-D-glucosamine + phosphate. It participates in cell wall biogenesis; peptidoglycan biosynthesis. Functionally, cell wall formation. Adds enolpyruvyl to UDP-N-acetylglucosamine. This Deinococcus radiodurans (strain ATCC 13939 / DSM 20539 / JCM 16871 / CCUG 27074 / LMG 4051 / NBRC 15346 / NCIMB 9279 / VKM B-1422 / R1) protein is UDP-N-acetylglucosamine 1-carboxyvinyltransferase.